The primary structure comprises 506 residues: CDK5 regulatory subunit-associated protein 3 (506 aa).

3 consecutive short sequence motifs (shuffled ATG8-binding motif) follow at residues 267–270 (IDWG), 292–295 (IDWG), and 310–313 (IDWG). A required for interaction with UFL1 and mediates interaction with CHEK1 region spans residues 269-506 (WGDFGVEAVS…RPVNLMGTSL (238 aa)). Residues 355–370 (DELMELEIFLAQRAVE) are RPL10a-binding domain (RBD). Lys450 is covalently cross-linked (Glycyl lysine isopeptide (Lys-Gly) (interchain with G-Cter in SUMO2)).

This sequence belongs to the CDK5RAP3 family. As to quaternary structure, substrate adapter component of the UFM1 ribosome E3 ligase (UREL) complex, composed of UFL1, DDRGK1 and CDK5RAP3. Interaction with UFL1 anchors CDK5RAP3 in the cytoplasm, preventing its translocation to the nucleus which allows expression of the CCND1 cyclin and progression of cells through the G1/S transition. Interacts with ATG8 family proteins MAP1LC3A, MAP1LC3B, GABARAP, GABARAPL1 and GABARAPL2. Interacts with CDK5R1; competes with CDK5RAP1 and CDK5RAP2. Interacts with RELA. Interacts with CHEK1; may negatively regulate CHEK1 and thereby stimulate entry into mitosis. Interacts with CDKN2A/ARF and MDM2; forms a ternary complex involved in regulation of p53/TP53. Interacts with MAPK14. Interacts with CCNB1. Interacts with TUBG1; may regulate CDK5RAP3 in mitotic G2/M transition checkpoint. (Microbial infection) Interacts with hepatitis B virus large envelope protein mutant pre-s2; promotes mitotic entry. Post-translationally, may be phosphorylated by CDK5. Ubiquitinated. Probably triggers proteasomal degradation and is negatively regulated by UFL1. In terms of processing, may be ufmylated. Post-translationally, cleaved by caspases early during apoptosis, the resulting peptides may play a role in rupture of the nuclear envelope. In terms of tissue distribution, ubiquitously expressed. Expressed in heart, brain, placenta, lung, liver, skeletal muscle, kidney and pancreas. Isoform 3 is expressed in kidney, liver, skeletal muscle and placenta.

Its subcellular location is the endoplasmic reticulum membrane. The protein localises to the cytoplasm. It localises to the nucleus. The protein resides in the cytoskeleton. It is found in the microtubule organizing center. Its subcellular location is the centrosome. Substrate adapter of E3 ligase complexes mediating ufmylation, the covalent attachment of the ubiquitin-like modifier UFM1 to substrate proteins, and which is involved in various processes, such as ribosome recycling and reticulophagy (also called ER-phagy). As part of the UREL complex, plays a key role in ribosome recycling by promoting mono-ufmylation of RPL26/uL24 subunit of the 60S ribosome. Ufmylation of RPL26/uL24 occurs on free 60S ribosomes following ribosome dissociation: it weakens the junction between post-termination 60S subunits and SEC61 translocons, promoting release and recycling of the large ribosomal subunit from the endoplasmic reticulum membrane. Ufmylation of RPL26/uL24 and subsequent 60S ribosome recycling either take place after normal termination of translation or after ribosome stalling during cotranslational translocation at the endoplasmic reticulum. Within the UREL complex, CDK5RAP3 acts as a substrate adapter that constrains UFL1 ligase activity to mono-ufmylate RPL26/uL24 at 'Lys-134'. The UREL complex is also involved in reticulophagy in response to endoplasmic reticulum stress by promoting ufmylation of proteins such as CYB5R3, thereby promoting lysosomal degradation of ufmylated proteins. Also acts as a regulator of transcription: negatively regulates NF-kappa-B-mediated gene transcription through the control of RELA phosphorylation. Also regulates mitotic G2/M transition checkpoint and mitotic G2 DNA damage checkpoint. Through its interaction with CDKN2A/ARF and MDM2 may induce MDM2-dependent p53/TP53 ubiquitination, stabilization and activation in the nucleus, thereby promoting G1 cell cycle arrest and inhibition of cell proliferation. May also play a role in the rupture of the nuclear envelope during apoptosis. May regulate MAPK14 activity by regulating its dephosphorylation by PPM1D/WIP1. Required for liver development. Functionally, (Microbial infection) May be negatively regulated by hepatitis B virus large envelope protein mutant pre-s2 to promote mitotic entry. This is CDK5 regulatory subunit-associated protein 3 from Homo sapiens (Human).